Reading from the N-terminus, the 256-residue chain is H-2 class II histocompatibility antigen, A-K alpha chain (256 aa).

An N-terminal signal peptide occupies residues 1-23; sequence MPRSRALILGVLALTTMLSLCGG. Residues 24 to 111 form an alpha-1 region; sequence EDDIEADHVG…KRSNSTPATN (88 aa). Topologically, residues 24 to 218 are extracellular; sequence EDDIEADHVG…IPAPMSELTE (195 aa). N-linked (GlcNAc...) asparagine glycosylation is found at Asn105 and Asn145. The alpha-2 stretch occupies residues 112–205; the sequence is EAPQATVFPK…GLEEPVLKHW (94 aa). An Ig-like C1-type domain is found at 114–206; sequence PQATVFPKSP…LEEPVLKHWE (93 aa). An intrachain disulfide couples Cys134 to Cys190. Positions 206–218 are connecting peptide; that stretch reads EPEIPAPMSELTE. Residues 219-241 form a helical membrane-spanning segment; that stretch reads TVVCALGLSVGLVGIVVGTIFII. The Cytoplasmic portion of the chain corresponds to 242–256; that stretch reads QGLRSGGTSRHPGPL.

The protein belongs to the MHC class II family.

The protein resides in the membrane. The protein is H-2 class II histocompatibility antigen, A-K alpha chain (H2-Aa) of Mus musculus (Mouse).